The chain runs to 302 residues: Rab effector Noc2 (302 aa).

The region spanning 41–158 is the RabBD domain; it reads QRRTQCLSPG…KRSGAWFYKG (118 aa). An FYVE-type zinc finger spans residues 89–146; it reads GNGVSQCLLCGEMLGFLGSSSVFCKDCRKKVCTKCGIEASPGQKRPLWLCKICSEQRE. Cys95, Cys98, Cys112, Cys115, Cys120, Cys123, Cys138, and Cys141 together coordinate Zn(2+). Disordered regions lie at residues 174 to 194 and 206 to 302; these read DPHFRPLPVEPTEPQPQSAEV and VSSD…TTHY. At Ser248 the chain carries Phosphoserine. Over residues 258–269 the composition is skewed to low complexity; that stretch reads SHLSGSQSSLGS.

In terms of assembly, recruited to dense-core vesicles through specific interaction with RAB27A in endocrine cells. Interacts with RAB3A, RAB3B, RAB3C and RAB3D. Interacts with ZYX. As to expression, highly expressed in pancreatic islets and parotid. High to moderate expression in adrenal gland, pituitary gland and ovary.

The protein localises to the cytoplasm. It is found in the cytoplasmic vesicle. The protein resides in the secretory vesicle membrane. Its function is as follows. Rab GTPase effector involved in the late steps of regulated exocytosis, both in endocrine and exocrine cells. Regulates the exocytosis of dense-core vesicles in neuroendocrine cells through interaction with RAB27A. Acts as a potential RAB3B effector protein in epithelial cells. This chain is Rab effector Noc2 (Rph3al), found in Rattus norvegicus (Rat).